We begin with the raw amino-acid sequence, 258 residues long: Indole-3-glycerol phosphate synthase (258 aa).

This sequence belongs to the TrpC family.

It catalyses the reaction 1-(2-carboxyphenylamino)-1-deoxy-D-ribulose 5-phosphate + H(+) = (1S,2R)-1-C-(indol-3-yl)glycerol 3-phosphate + CO2 + H2O. The protein operates within amino-acid biosynthesis; L-tryptophan biosynthesis; L-tryptophan from chorismate: step 4/5. The protein is Indole-3-glycerol phosphate synthase of Chlorobium limicola (strain DSM 245 / NBRC 103803 / 6330).